Reading from the N-terminus, the 695-residue chain is Segment polarity protein dishevelled homolog DVL-1 (695 aa).

In terms of domain architecture, DIX spans 1 to 85; sequence MAETKIIYHM…RVVSWLVLAE (85 aa). The segment at 89 to 235 is disordered; it reads SDAGSQGTDS…QRLRQTDRAS (147 aa). A compositionally biased stretch (basic residues) spans 142-151; the sequence is SHRRERARRR. A compositionally biased stretch (basic and acidic residues) spans 152 to 171; sequence NRDEAARTNGHPRGDRRRDL. A compositionally biased stretch (low complexity) spans 177-192; it reads SASTVLSSELESSSFI. At serine 194 the chain carries Phosphoserine. The segment covering 201-214 has biased composition (low complexity); it reads SRLSSSTEQSTSSR. Residues 215–228 show a composition bias toward basic residues; it reads LVRKHKCRRRKQRL. The region spanning 251 to 323 is the PDZ domain; the sequence is TVTLNMERHH…NDDAVRVLRE (73 aa). The DEP domain maps to 425 to 499; it reads PDSGLEIRDR…SEQCYYVFGD (75 aa). Low complexity predominate over residues 559–580; the sequence is SCGSGSAGSQQSEGSKSSGSTR. The segment at 559–641 is disordered; the sequence is SCGSGSAGSQ…SQASAVAPGL (83 aa). A compositionally biased stretch (polar residues) spans 622-635; the sequence is SQLSRGSSPRSQAS.

Belongs to the DSH family. Interacts with CXXC4. Interacts (via PDZ domain) with TMEM88. Interacts with BRD7 and INVS. Interacts (via PDZ domain) with VANGL1 and VANGL2 (via C-terminus). Interacts (via PDZ domain) with NXN. Interacts with ARRB1; the interaction is enhanced by phosphorylation of DVL1. Interacts with CYLD. Interacts (via PDZ domain) with RYK. Self-associates (via DIX domain) and forms higher homooligomers. Interacts (via PDZ domain) with DACT1 and FZD7, where DACT1 and FZD7 compete for the same binding site. Interacts (via DEP domain) with MUSK; the interaction is direct and mediates the formation a DVL1, MUSK and PAK1 ternary complex involved in AChR clustering. Interacts with DCDC2. Interacts with FOXK2. Interacts with PKD1 (via extracellular domain). Interacts (via PDZ domain) with CCDC88C/DAPLE; competes with CCDC88C for binding to frizzled receptor FZD7 and dissociates from CCDC88C following initiation of non-canonical Wnt signaling when CCDC88C displaces DVL1 from ligand-activated FZD7. Post-translationally, ubiquitinated; undergoes both 'Lys-48'-linked ubiquitination, leading to its subsequent degradation by the ubiquitin-proteasome pathway, and 'Lys-63'-linked ubiquitination. The interaction with INVS is required for ubiquitination. Deubiquitinated by CYLD, which acts on 'Lys-63'-linked ubiquitin chains. High levels are seen in the brain, testis and kidney, lower levels in the ovary, breast, muscle, liver and small intestine, and very low levels are seen in the spleen and thymus. A moderate level expression is seen in the heart.

It is found in the cell membrane. It localises to the cytoplasm. The protein localises to the cytosol. Its subcellular location is the cytoplasmic vesicle. Functionally, participates in Wnt signaling by binding to the cytoplasmic C-terminus of frizzled family members and transducing the Wnt signal to down-stream effectors. Plays a role both in canonical and non-canonical Wnt signaling. Plays a role in the signal transduction pathways mediated by multiple Wnt genes. Required for LEF1 activation upon WNT1 and WNT3A signaling. DVL1 and PAK1 form a ternary complex with MUSK which is important for MUSK-dependent regulation of AChR clustering during the formation of the neuromuscular junction (NMJ). This chain is Segment polarity protein dishevelled homolog DVL-1 (Dvl1), found in Mus musculus (Mouse).